We begin with the raw amino-acid sequence, 344 residues long: AA9 family lytic polysaccharide monooxygenase cel61A (344 aa).

The signal sequence occupies residues 1-21 (MIQKLSNLLVTALAVATGVVG). Residue His-22 participates in Cu(2+) binding. 2 cysteine pairs are disulfide-bonded: Cys-77–Cys-198 and Cys-118–Cys-122. Asn-80 carries N-linked (GlcNAc...) asparagine glycosylation. Residue His-107 coordinates Cu(2+). Asn-158 carries an N-linked (GlcNAc...) asparagine glycan. 2 residues coordinate O2: His-184 and Gln-193. Tyr-195 is a Cu(2+) binding site. The tract at residues 262 to 310 (ATASATVPGGGSGPTSRTTTTARTTQASSRPSSTPPATTSAPAGGPTQT) is disordered. The span at 275 to 310 (PTSRTTTTARTTQASSRPSSTPPATTSAPAGGPTQT) shows a compositional bias: low complexity. The region spanning 307–343 (PTQTLYGQCGGSGYSGPTRCAPPATCSTLNPYYAQCL) is the CBM1 domain.

It belongs to the polysaccharide monooxygenase AA9 family. Cu(2+) is required as a cofactor.

It is found in the secreted. The enzyme catalyses [(1-&gt;4)-beta-D-glucosyl]n+m + reduced acceptor + O2 = 4-dehydro-beta-D-glucosyl-[(1-&gt;4)-beta-D-glucosyl]n-1 + [(1-&gt;4)-beta-D-glucosyl]m + acceptor + H2O.. Functionally, lytic polysaccharide monooxygenase (LPMO) that depolymerizes crystalline and amorphous polysaccharides via the oxidation of scissile alpha- or beta-(1-4)-glycosidic bonds, yielding C1 or C4 oxidation products. Catalysis by LPMOs requires the reduction of the active-site copper from Cu(II) to Cu(I) by a reducing agent and H(2)O(2) or O(2) as a cosubstrate. Shows activity on beta-glucan and amorphous cellulose. Does not show beta-1-3-glucanase, beta-1,6-glucanase, mannanase, xylanase, beta-1,3-galactosidase, amylase, pectinase, nor chitinase activities. In Hypocrea jecorina (Trichoderma reesei), this protein is AA9 family lytic polysaccharide monooxygenase cel61A.